Consider the following 821-residue polypeptide: DNA replication licensing factor MCM6 (821 aa).

An N-acetylmethionine modification is found at methionine 1. Phosphoserine is present on residues serine 13, serine 219, and serine 271. Position 278 is a phosphothreonine (threonine 278). An MCM domain is found at 346 to 553 (LYHNLCTSLF…TDYAIARRIV (208 aa)). 7 residues coordinate ATP: histidine 359, serine 399, threonine 400, alanine 401, lysine 402, serine 403, and asparagine 504. The Arginine finger motif lies at 528–531 (SRFD). Arginine 619 and glutamate 622 together coordinate ADP. Lysine 643 carries the N6-acetyllysine modification. The interval 676-708 (TDEGQGGVNGHADSPAPVNRFNGSSEDASQETV) is disordered. Residues serine 689, serine 704, and serine 762 each carry the phosphoserine modification. The span at 696–708 (FNGSSEDASQETV) shows a compositional bias: polar residues. A Phosphothreonine modification is found at threonine 791.

Belongs to the MCM family. Component of the MCM2-7 complex. The complex forms a toroidal hexameric ring with the proposed subunit order MCM2-MCM6-MCM4-MCM7-MCM3-MCM5. Component of the CMG helicase complex, a hexameric ring of related MCM2-7 subunits stabilized by CDC45 and the tetrameric GINS complex. May interact with MCM10. Interacts with TIPIN. Interacts with CDT1. Interacts with MCMBP. Interacts with DDI2. In terms of processing, O-glycosylated (O-GlcNAcylated), in a cell cycle-dependent manner.

Its subcellular location is the nucleus. The protein localises to the chromosome. It catalyses the reaction ATP + H2O = ADP + phosphate + H(+). In terms of biological role, acts as a component of the MCM2-7 complex (MCM complex) which is the replicative helicase essential for 'once per cell cycle' DNA replication initiation and elongation in eukaryotic cells. Core component of CDC45-MCM-GINS (CMG) helicase, the molecular machine that unwinds template DNA during replication, and around which the replisome is built. The active ATPase sites in the MCM2-7 ring are formed through the interaction surfaces of two neighboring subunits such that a critical structure of a conserved arginine finger motif is provided in trans relative to the ATP-binding site of the Walker A box of the adjacent subunit. The six ATPase active sites, however, are likely to contribute differentially to the complex helicase activity. This is DNA replication licensing factor MCM6 (Mcm6) from Mus musculus (Mouse).